The chain runs to 110 residues: NADH-quinone oxidoreductase subunit K (110 aa).

Transmembrane regions (helical) follow at residues 14-34, 39-59, and 70-90; these read VSQY…GMMV, ITIL…FVGI, and IFAL…LGII.

The protein belongs to the complex I subunit 4L family. In terms of assembly, NDH-1 is composed of 14 different subunits. Subunits NuoA, H, J, K, L, M, N constitute the membrane sector of the complex.

It is found in the cell inner membrane. The catalysed reaction is a quinone + NADH + 5 H(+)(in) = a quinol + NAD(+) + 4 H(+)(out). Its function is as follows. NDH-1 shuttles electrons from NADH, via FMN and iron-sulfur (Fe-S) centers, to quinones in the respiratory chain. The immediate electron acceptor for the enzyme in this species is believed to be ubiquinone. Couples the redox reaction to proton translocation (for every two electrons transferred, four hydrogen ions are translocated across the cytoplasmic membrane), and thus conserves the redox energy in a proton gradient. The chain is NADH-quinone oxidoreductase subunit K from Hydrogenobaculum sp. (strain Y04AAS1).